Consider the following 232-residue polypeptide: 7-cyano-7-deazaguanine synthase (232 aa).

Position 7–17 (7–17) interacts with ATP; it reads CSGGLDSVSLA. Zn(2+)-binding residues include C185, C193, C196, and C199.

The protein belongs to the QueC family. Zn(2+) serves as cofactor.

It catalyses the reaction 7-carboxy-7-deazaguanine + NH4(+) + ATP = 7-cyano-7-deazaguanine + ADP + phosphate + H2O + H(+). Its pathway is purine metabolism; 7-cyano-7-deazaguanine biosynthesis. Its function is as follows. Catalyzes the ATP-dependent conversion of 7-carboxy-7-deazaguanine (CDG) to 7-cyano-7-deazaguanine (preQ(0)). This Brucella anthropi (strain ATCC 49188 / DSM 6882 / CCUG 24695 / JCM 21032 / LMG 3331 / NBRC 15819 / NCTC 12168 / Alc 37) (Ochrobactrum anthropi) protein is 7-cyano-7-deazaguanine synthase.